A 355-amino-acid chain; its full sequence is S-adenosylmethionine:tRNA ribosyltransferase-isomerase (355 aa).

Belongs to the QueA family. As to quaternary structure, monomer.

It is found in the cytoplasm. It carries out the reaction 7-aminomethyl-7-carbaguanosine(34) in tRNA + S-adenosyl-L-methionine = epoxyqueuosine(34) in tRNA + adenine + L-methionine + 2 H(+). It participates in tRNA modification; tRNA-queuosine biosynthesis. Functionally, transfers and isomerizes the ribose moiety from AdoMet to the 7-aminomethyl group of 7-deazaguanine (preQ1-tRNA) to give epoxyqueuosine (oQ-tRNA). The polypeptide is S-adenosylmethionine:tRNA ribosyltransferase-isomerase (Aeromonas salmonicida (strain A449)).